The sequence spans 524 residues: Indoleacetamide hydrolase (524 aa).

Composition is skewed to basic residues over residues 1–26 and 34–54; these read MAKKTASKKKSVSRKVTKTSSKKATA and AAKKSVKKAAPRKSATARRPK. The tract at residues 1–56 is disordered; the sequence is MAKKTASKKKSVSRKVTKTSSKKATARKGAVAKAAKKSVKKAAPRKSATARRPKGP. Active-site charge relay system residues include Lys-133 and Ser-208. Ser-232 functions as the Acyl-ester intermediate in the catalytic mechanism.

It belongs to the amidase family.

The protein operates within plant hormone metabolism; auxin biosynthesis. Hydrolyzes indole-3-acetamide (IAM) into indole-3-acetic acid (IAA). In Bradyrhizobium diazoefficiens (strain JCM 10833 / BCRC 13528 / IAM 13628 / NBRC 14792 / USDA 110), this protein is Indoleacetamide hydrolase (bam).